Reading from the N-terminus, the 1218-residue chain is Probable cation-transporting ATPase 13A5 (1218 aa).

A run of 4 helical transmembrane segments spans residues 33 to 53 (KAFC…VFYW), 222 to 242 (GYIE…VLSV), 401 to 421 (FIVF…GVYM), and 433 to 453 (MALI…LTIG). Asp-486 functions as the 4-aspartylphosphate intermediate in the catalytic mechanism. N-linked (GlcNAc...) asparagine glycans are attached at residues Asn-540, Asn-669, and Asn-819. 2 residues coordinate Mg(2+): Asp-850 and Asp-854. 6 consecutive transmembrane segments (helical) span residues 903–923 (FGVF…ALLL), 940–956 (VAIT…THAY), 973–993 (LLLS…SAFL), 1042–1062 (FETT…AFIF), 1077–1097 (IFSF…FSDF), and 1115–1135 (VLIL…EDSI).

This sequence belongs to the cation transport ATPase (P-type) (TC 3.A.3) family. Type V subfamily.

The protein resides in the membrane. It carries out the reaction ATP + H2O = ADP + phosphate + H(+). The sequence is that of Probable cation-transporting ATPase 13A5 (ATP13A5) from Homo sapiens (Human).